Reading from the N-terminus, the 205-residue chain is Alpha-1-acid glycoprotein (205 aa).

The signal sequence occupies residues 1–18; sequence MALHMVLVVLSLLPLLEA. N25, N34, N76, N94, N104, and N134 each carry an N-linked (GlcNAc...) asparagine glycan. An intrachain disulfide couples C91 to C183.

Belongs to the calycin superfamily. Lipocalin family.

Its subcellular location is the secreted. Its function is as follows. Functions as a transport protein in the blood stream. Binds various ligands in the interior of its beta-barrel domain. Appears to function in modulating the activity of the immune system during the acute-phase reaction. In Rattus norvegicus (Rat), this protein is Alpha-1-acid glycoprotein (Orm1).